Consider the following 565-residue polypeptide: Protein unc-87 (565 aa).

Positions 1-27 (MLSFNNTTSASSFQSASSRYLMSSSSS) are enriched in low complexity. Disordered stretches follow at residues 1–83 (MLSF…TTNS) and 237–262 (IPSQ…RNTN). Residues 54–69 (EALERLRPNTASRERN) show a composition bias toward basic and acidic residues. 3 Calponin-like repeats span residues 237–262 (IPSQ…RNTN), 285–310 (VRLQ…RDVC), and 338–363 (VRLQ…RRET). Residues 250 to 262 (KLMTNFGTPRNTN) show a composition bias toward polar residues. Positions 369–381 (SKHPEYDHEKPDQ) are enriched in basic and acidic residues. The interval 369–400 (SKHPEYDHEKPDQSEIPLQSGTNKFASQKGMT) is disordered. The span at 384–398 (IPLQSGTNKFASQKG) shows a compositional bias: polar residues. Calponin-like repeat units lie at residues 384–409 (IPLQ…RRET), 431–456 (IPSQ…RWEV), 472–497 (VRLQ…RNTT), and 517–542 (IPSQ…RDVK).

Belongs to the calponin family. As to quaternary structure, monomer. Interacts with F-actin. Interacts with myosin. In terms of tissue distribution, expressed in the body wall muscles. Isoform a: Expression in the pharynx, anal depressor muscle, uterine muscle, vulva and unidentified neurons in the head and the ventral region. Isoform b: Expression in the body wall muscles, spermatheca, vulva and in the myoepithelial sheath.

The protein resides in the cytoplasm. It localises to the myofibril. It is found in the sarcomere. Its subcellular location is the i band. Functionally, thin filament-associated protein that is implicated in actin bundling and actin filament dynamics. Exhibits F-actin cross-linking activity. Required for the maintenance of sarcomeric actin organization in striated muscles. Competes with unc-60 isoform b for actin binding and protects actin filaments from depolymerization by unc-60, thereby contributing to actin filament stability. Cooperates with myosin to form actomyosin bundles and inhibits actomyosin ATPase activity and actomyosin motility. Might protect the myofilaments from mechanical stress. In terms of biological role, acts as a negative regulator of myosin-dependent contractility of smooth muscle-like cells in the somatic gonad. This is Protein unc-87 (unc-87) from Caenorhabditis elegans.